Reading from the N-terminus, the 109-residue chain is MLLITSMLVLWMQLSQVNGQQVMQIPQYQHVQEGEDFTTYCNSSTTLSNIQWYKQRPGGHPVFLIQLVKSGEVKKQKRLTFQFGEAKKNSSLHITATQTTDVGTYFCAG.

A signal peptide spans 1 to 19 (MLLITSMLVLWMQLSQVNG). Residues 20-109 (QQVMQIPQYQ…TDVGTYFCAG (90 aa)) enclose the Ig-like domain. Cys-41 and Cys-107 form a disulfide bridge. Residues Asn-42 and Asn-89 are each glycosylated (N-linked (GlcNAc...) asparagine).

As to quaternary structure, alpha-beta TR is a heterodimer composed of an alpha and beta chain; disulfide-linked. The alpha-beta TR is associated with the transmembrane signaling CD3 coreceptor proteins to form the TR-CD3 (TcR or TCR). The assembly of alpha-beta TR heterodimers with CD3 occurs in the endoplasmic reticulum where a single alpha-beta TR heterodimer associates with one CD3D-CD3E heterodimer, one CD3G-CD3E heterodimer and one CD247 homodimer forming a stable octameric structure. CD3D-CD3E and CD3G-CD3E heterodimers preferentially associate with TR alpha and TR beta chains, respectively. The association of the CD247 homodimer is the last step of TcR assembly in the endoplasmic reticulum and is required for transport to the cell surface.

Its subcellular location is the cell membrane. V region of the variable domain of T cell receptor (TR) alpha chain that participates in the antigen recognition. Alpha-beta T cell receptors are antigen specific receptors which are essential to the immune response and are present on the cell surface of T lymphocytes. Recognize peptide-major histocompatibility (MH) (pMH) complexes that are displayed by antigen presenting cells (APC), a prerequisite for efficient T cell adaptive immunity against pathogens. Binding of alpha-beta TR to pMH complex initiates TR-CD3 clustering on the cell surface and intracellular activation of LCK that phosphorylates the ITAM motifs of CD3G, CD3D, CD3E and CD247 enabling the recruitment of ZAP70. In turn ZAP70 phosphorylates LAT, which recruits numerous signaling molecules to form the LAT signalosome. The LAT signalosome propagates signal branching to three major signaling pathways, the calcium, the mitogen-activated protein kinase (MAPK) kinase and the nuclear factor NF-kappa-B (NF-kB) pathways, leading to the mobilization of transcription factors that are critical for gene expression and essential for T cell growth and differentiation. The T cell repertoire is generated in the thymus, by V-(D)-J rearrangement. This repertoire is then shaped by intrathymic selection events to generate a peripheral T cell pool of self-MH restricted, non-autoaggressive T cells. Post-thymic interaction of alpha-beta TR with the pMH complexes shapes TR structural and functional avidity. The sequence is that of T cell receptor alpha variable 25 from Homo sapiens (Human).